The chain runs to 123 residues: Large ribosomal subunit protein uL18 (123 aa).

It belongs to the universal ribosomal protein uL18 family. Part of the 50S ribosomal subunit; part of the 5S rRNA/L5/L18/L25 subcomplex. Contacts the 5S and 23S rRNAs.

In terms of biological role, this is one of the proteins that bind and probably mediate the attachment of the 5S RNA into the large ribosomal subunit, where it forms part of the central protuberance. This Wolbachia pipientis wMel protein is Large ribosomal subunit protein uL18.